Reading from the N-terminus, the 241-residue chain is Pre-rRNA-processing protein pno1 (241 aa).

Residues 48–71 (APAKTSAEKKRGAKPQMRRVPIPP) are disordered. A Phosphothreonine modification is found at threonine 52. One can recognise a KH domain in the interval 162-214 (GDHLSRAIGRIAGQGGKTKFAIENASRTRIVLADSKIHILGGFTNIRIAKDAV).

It belongs to the PNO1 family. Component of the small ribosomal subunit, ribosomal RNA processing complex (SSU RRP complex).

It localises to the cytoplasm. Its subcellular location is the nucleus. It is found in the nucleolus. Required for small ribosomal subunit (SSU) synthesis. Has a role in the processing of early nucleolar and late cytoplasmic pre-RNA species. This is Pre-rRNA-processing protein pno1 (rbp28) from Schizosaccharomyces pombe (strain 972 / ATCC 24843) (Fission yeast).